A 212-amino-acid polypeptide reads, in one-letter code: Protein YIPF5 homolog (212 aa).

Residues 1–79 (MNNNNSFNFI…KKIDSHIMDD (79 aa)) lie on the Cytoplasmic side of the membrane. A helical transmembrane segment spans residues 80–100 (TDLGGPILFGLLLGFSLLMSG). Lys-101 is a topological domain (lumenal). A helical transmembrane segment spans residues 102–122 (IQFGYIYGLGLIGCVSMYIVL). The Cytoplasmic portion of the chain corresponds to 123–128 (NLMSEK). The chain crosses the membrane as a helical span at residues 129 to 149 (GIDIYRVISVLGYCLLPMIFL). Residues 150–163 (SFTSLIININGMVG) are Lumenal-facing. Residues 164 to 186 (YILIGFAIVWSTYSASKMFVKVL) traverse the membrane as a helical segment. The Cytoplasmic segment spans residues 187 to 191 (SMIDQ). A helical membrane pass occupies residues 192–212 (RILVAYPVGLLYTGFALITAF).

It belongs to the YIP1 family.

The protein resides in the endoplasmic reticulum membrane. Its subcellular location is the golgi apparatus. It is found in the cis-Golgi network membrane. Plays a role in transport between endoplasmic reticulum and Golgi. This is Protein YIPF5 homolog (yipf5) from Dictyostelium discoideum (Social amoeba).